An 876-amino-acid polypeptide reads, in one-letter code: Alanine--tRNA ligase (876 aa).

Residues histidine 564, histidine 568, cysteine 666, and histidine 670 each coordinate Zn(2+).

It belongs to the class-II aminoacyl-tRNA synthetase family. Requires Zn(2+) as cofactor.

It localises to the cytoplasm. The enzyme catalyses tRNA(Ala) + L-alanine + ATP = L-alanyl-tRNA(Ala) + AMP + diphosphate. Functionally, catalyzes the attachment of alanine to tRNA(Ala) in a two-step reaction: alanine is first activated by ATP to form Ala-AMP and then transferred to the acceptor end of tRNA(Ala). Also edits incorrectly charged Ser-tRNA(Ala) and Gly-tRNA(Ala) via its editing domain. The sequence is that of Alanine--tRNA ligase from Porphyromonas gingivalis (strain ATCC BAA-308 / W83).